Reading from the N-terminus, the 611-residue chain is Leucine aminopeptidase (611 aa).

Substrate contacts are provided by residues 129-131 and 278-282; these read QCQ and GGMEN. Residue His305 coordinates Zn(2+). Glu306 (proton acceptor) is an active-site residue. Zn(2+) contacts are provided by His309 and Glu328. Tyr393 acts as the Proton donor in catalysis. 562–564 provides a ligand contact to substrate; that stretch reads RMK.

It belongs to the peptidase M1 family. Requires Zn(2+) as cofactor.

The protein localises to the cytoplasm. The enzyme catalyses an epoxide + H2O = an ethanediol. Its function is as follows. Aminopeptidase that preferentially cleaves di- and tripeptides. Also has low epoxide hydrolase activity (in vitro). Can hydrolyze the epoxide leukotriene LTA(4) but it forms preferentially 5,6-dihydroxy-7,9,11,14-eicosatetraenoic acid rather than the cytokine leukotriene B(4) as the product compared to the homologous mammalian enzyme (in vitro). In Oryza sativa subsp. japonica (Rice), this protein is Leucine aminopeptidase (LKHA4).